An 826-amino-acid polypeptide reads, in one-letter code: Homeobox-leucine zipper protein HDG5 (826 aa).

Disordered stretches follow at residues 1–34 and 69–119; these read MLTMGEGNVMTSNNRFASPPQQPSSSSPGTIQNP and EMME…HRHT. The span at 23–34 shows a compositional bias: low complexity; it reads PSSSSPGTIQNP. Over residues 88-105 the composition is skewed to basic and acidic residues; sequence EDPKFGNESDVNELHDDE. Over residues 110 to 119 the composition is skewed to basic residues; it reads AKKKRYHRHT. Residues 111-170 constitute a DNA-binding region (homeobox); that stretch reads KKKRYHRHTNRQIQEMEALFKENPHPDDKQRKRLSAELGLKPRQVKFWFQNRRTQMKAQQ. Residues 165 to 189 are a coiled coil; it reads QMKAQQDRNENVMLRAENDNLKSEN. The region spanning 314-558 is the START domain; that stretch reads ADEEKVIAME…LQRQCERIAS (245 aa).

The protein belongs to the HD-ZIP homeobox family. Class IV subfamily. Expressed in shoot apical meristem (SAM) with higher levels in L1 cells and the epidermal layer of young leaves. Expressed in the L1 of apical inflorescence meristems, early flower primordia, carpel and stamen filament epidermis, ovule primordia, nucellus and chalaze.

It localises to the nucleus. Its function is as follows. Probable transcription factor. Involved, together with PDF2, in the regulation of flower organs development by promoting the expression of APETALA 3 (AP3) in the epidermis and internal cell layers of developing flowers. The sequence is that of Homeobox-leucine zipper protein HDG5 from Arabidopsis thaliana (Mouse-ear cress).